Reading from the N-terminus, the 146-residue chain is Large ribosomal subunit protein uL15 (146 aa).

Residues 1–54 form a disordered region; sequence MKLHELQPAAGSRKAPKRVGRGTGSGLGRNAGKGEKGQNARSGGGVRPGFEGGQ. 2 stretches are compositionally biased toward gly residues: residues 21–31 and 42–52; these read RGTGSGLGRNA and SGGGVRPGFEG.

It belongs to the universal ribosomal protein uL15 family. Part of the 50S ribosomal subunit.

In terms of biological role, binds to the 23S rRNA. This chain is Large ribosomal subunit protein uL15, found in Clostridium botulinum (strain Alaska E43 / Type E3).